Here is a 267-residue protein sequence, read N- to C-terminus: Indole-3-glycerol phosphate synthase (267 aa).

This sequence belongs to the TrpC family.

The catalysed reaction is 1-(2-carboxyphenylamino)-1-deoxy-D-ribulose 5-phosphate + H(+) = (1S,2R)-1-C-(indol-3-yl)glycerol 3-phosphate + CO2 + H2O. It functions in the pathway amino-acid biosynthesis; L-tryptophan biosynthesis; L-tryptophan from chorismate: step 4/5. In Cupriavidus pinatubonensis (strain JMP 134 / LMG 1197) (Cupriavidus necator (strain JMP 134)), this protein is Indole-3-glycerol phosphate synthase.